Consider the following 459-residue polypeptide: Probable D-serine dehydratase (459 aa).

K119 carries the post-translational modification N6-(pyridoxal phosphate)lysine.

It belongs to the serine/threonine dehydratase family. DsdA subfamily. It depends on pyridoxal 5'-phosphate as a cofactor.

The enzyme catalyses D-serine = pyruvate + NH4(+). The protein is Probable D-serine dehydratase of Geobacillus stearothermophilus (Bacillus stearothermophilus).